The chain runs to 30 residues: Beta-endorphin-2 (30 aa).

Residue tyrosine 1 is modified to N-acetyltyrosine.

Belongs to the POMC family.

Its subcellular location is the secreted. This is Beta-endorphin-2 from Oncorhynchus keta (Chum salmon).